We begin with the raw amino-acid sequence, 357 residues long: Protein-glutamate methylesterase/protein-glutamine glutaminase 1 (357 aa).

One can recognise a Response regulatory domain in the interval 7-125 (RAVIIDDSLL…QFDPEEIGNI (119 aa)). The residue at position 58 (Asp58) is a 4-aspartylphosphate. Residues 162 to 344 (KKSPIQAICI…VEYIEPVTEI (183 aa)) form the CheB-type methylesterase domain. Active-site residues include Ser174, His201, and Asp297.

This sequence belongs to the CheB family. In terms of processing, phosphorylated by CheA. Phosphorylation of the N-terminal regulatory domain activates the methylesterase activity.

The protein localises to the cytoplasm. The enzyme catalyses [protein]-L-glutamate 5-O-methyl ester + H2O = L-glutamyl-[protein] + methanol + H(+). The catalysed reaction is L-glutaminyl-[protein] + H2O = L-glutamyl-[protein] + NH4(+). Functionally, involved in chemotaxis. Part of a chemotaxis signal transduction system that modulates chemotaxis in response to various stimuli. Catalyzes the demethylation of specific methylglutamate residues introduced into the chemoreceptors (methyl-accepting chemotaxis proteins or MCP) by CheR. Also mediates the irreversible deamidation of specific glutamine residues to glutamic acid. The chain is Protein-glutamate methylesterase/protein-glutamine glutaminase 1 from Leptospira interrogans serogroup Icterohaemorrhagiae serovar Lai (strain 56601).